A 71-amino-acid chain; its full sequence is Sec-independent protein translocase protein TatA (71 aa).

Residues 1–21 (MGASPVQLLIVLFIAVLVFGG) traverse the membrane as a helical segment.

Belongs to the TatA/E family. As to quaternary structure, the Tat system comprises two distinct complexes: a TatABC complex, containing multiple copies of TatA, TatB and TatC subunits, and a separate TatA complex, containing only TatA subunits. Substrates initially bind to the TatABC complex, which probably triggers association of the separate TatA complex to form the active translocon.

It is found in the cell inner membrane. In terms of biological role, part of the twin-arginine translocation (Tat) system that transports large folded proteins containing a characteristic twin-arginine motif in their signal peptide across membranes. TatA could form the protein-conducting channel of the Tat system. The sequence is that of Sec-independent protein translocase protein TatA from Dichelobacter nodosus (strain VCS1703A).